A 252-amino-acid polypeptide reads, in one-letter code: 3-deoxy-manno-octulosonate cytidylyltransferase (252 aa).

Belongs to the KdsB family.

The protein resides in the cytoplasm. The enzyme catalyses 3-deoxy-alpha-D-manno-oct-2-ulosonate + CTP = CMP-3-deoxy-beta-D-manno-octulosonate + diphosphate. Its pathway is nucleotide-sugar biosynthesis; CMP-3-deoxy-D-manno-octulosonate biosynthesis; CMP-3-deoxy-D-manno-octulosonate from 3-deoxy-D-manno-octulosonate and CTP: step 1/1. The protein operates within bacterial outer membrane biogenesis; lipopolysaccharide biosynthesis. Activates KDO (a required 8-carbon sugar) for incorporation into bacterial lipopolysaccharide in Gram-negative bacteria. This is 3-deoxy-manno-octulosonate cytidylyltransferase from Phocaeicola vulgatus (strain ATCC 8482 / DSM 1447 / JCM 5826 / CCUG 4940 / NBRC 14291 / NCTC 11154) (Bacteroides vulgatus).